The sequence spans 205 residues: Putative 3-methyladenine DNA glycosylase (205 aa).

Belongs to the DNA glycosylase MPG family.

This is Putative 3-methyladenine DNA glycosylase from Staphylococcus epidermidis (strain ATCC 35984 / DSM 28319 / BCRC 17069 / CCUG 31568 / BM 3577 / RP62A).